The sequence spans 173 residues: Translation initiation factor IF-3 (173 aa).

Belongs to the IF-3 family. Monomer.

The protein resides in the cytoplasm. In terms of biological role, IF-3 binds to the 30S ribosomal subunit and shifts the equilibrium between 70S ribosomes and their 50S and 30S subunits in favor of the free subunits, thus enhancing the availability of 30S subunits on which protein synthesis initiation begins. This Caulobacter sp. (strain K31) protein is Translation initiation factor IF-3.